The sequence spans 407 residues: Arginine deiminase (407 aa).

Residue cysteine 397 is the Amidino-cysteine intermediate of the active site.

It belongs to the arginine deiminase family.

It localises to the cytoplasm. It carries out the reaction L-arginine + H2O = L-citrulline + NH4(+). The protein operates within amino-acid degradation; L-arginine degradation via ADI pathway; carbamoyl phosphate from L-arginine: step 1/2. This chain is Arginine deiminase, found in Salmonella arizonae (strain ATCC BAA-731 / CDC346-86 / RSK2980).